Consider the following 308-residue polypeptide: Probable pyridoxal 5'-phosphate synthase subunit pdx-1 (308 aa).

Position 30 (Asp30) interacts with D-ribose 5-phosphate. Catalysis depends on Lys87, which acts as the Schiff-base intermediate with D-ribose 5-phosphate. Gly159 provides a ligand contact to D-ribose 5-phosphate. Arg171 contributes to the D-glyceraldehyde 3-phosphate binding site. Residues Gly224 and 245–246 (GS) each bind D-ribose 5-phosphate.

The protein belongs to the PdxS/SNZ family.

It carries out the reaction aldehydo-D-ribose 5-phosphate + D-glyceraldehyde 3-phosphate + L-glutamine = pyridoxal 5'-phosphate + L-glutamate + phosphate + 3 H2O + H(+). The protein operates within cofactor biosynthesis; pyridoxal 5'-phosphate biosynthesis. Catalyzes the formation of pyridoxal 5'-phosphate from ribose 5-phosphate (RBP), glyceraldehyde 3-phosphate (G3P) and ammonia. The ammonia is provided by pdx-2. Can also use ribulose 5-phosphate and dihydroxyacetone phosphate as substrates, resulting from enzyme-catalyzed isomerization of RBP and G3P, respectively. Also plays an indirect role in resistance to singlet oxygen-generating photosensitizers. In Neurospora crassa (strain ATCC 24698 / 74-OR23-1A / CBS 708.71 / DSM 1257 / FGSC 987), this protein is Probable pyridoxal 5'-phosphate synthase subunit pdx-1 (pdx-1).